The chain runs to 190 residues: Remorin (190 aa).

Positions 1–12 are enriched in basic and acidic residues; sequence MAEEQKTSKVDV. Disordered regions lie at residues 1-45 and 50-69; these read MAEE…VESK and VEKPIEEHTPKKASSGSADR. Serine 14 is modified (phosphoserine). Threonine 58 is modified (phosphothreonine). A coiled-coil region spans residues 92–147; that stretch reads EKSKAENRAQKKISDVHAWENSKKAAVEAQLRKIEEKLEKKKAQYGEKMKNKVAAI.

The protein belongs to the remorin family. As to quaternary structure, may polymerize to form filamentous structures. Expressed in roots, leaves, stems, flowers and siliques, with a maximal expression in apical regions.

Functionally, exhibits a non sequence-specific DNA-binding activity. In Arabidopsis thaliana (Mouse-ear cress), this protein is Remorin (DBP).